A 206-amino-acid chain; its full sequence is MATHDSKQLEILQYIYDTVENRGFPPTVREICAAVGLSSTSTVHGHLTRLERKGYLIKDATKPRALEITHAGLDALGIKPKDIPVIGVVTAGQPILAVQDVEDYFPLPPNLASDAGELFMLRVHGTSMINAGILNGDYVIVRKQTTAQNGEIVVAMTDDGEATVKRFFKEDLHYRLQPENDAMDPIILNHVQILGKVVGLYRTNID.

Positions 28 to 48 (VREICAAVGLSSTSTVHGHLT) form a DNA-binding region, H-T-H motif. Residues S127 and K165 each act as for autocatalytic cleavage activity in the active site.

Belongs to the peptidase S24 family. In terms of assembly, homodimer.

It carries out the reaction Hydrolysis of Ala-|-Gly bond in repressor LexA.. Functionally, represses a number of genes involved in the response to DNA damage (SOS response), including recA and lexA. In the presence of single-stranded DNA, RecA interacts with LexA causing an autocatalytic cleavage which disrupts the DNA-binding part of LexA, leading to derepression of the SOS regulon and eventually DNA repair. This is LexA repressor from Lactobacillus delbrueckii subsp. bulgaricus (strain ATCC 11842 / DSM 20081 / BCRC 10696 / JCM 1002 / NBRC 13953 / NCIMB 11778 / NCTC 12712 / WDCM 00102 / Lb 14).